Reading from the N-terminus, the 361-residue chain is Anthranilate phosphoribosyltransferase (361 aa).

5-phospho-alpha-D-ribose 1-diphosphate-binding positions include glycine 101, 104–105, threonine 109, 111–114, 129–137, and serine 141; these read GD, NIST, and KHGNRGVSS. Glycine 101 is an anthranilate binding site. Residue serine 113 participates in Mg(2+) binding. Asparagine 132 serves as a coordination point for anthranilate. Arginine 187 lines the anthranilate pocket. Residues aspartate 245 and glutamate 246 each contribute to the Mg(2+) site.

Belongs to the anthranilate phosphoribosyltransferase family. Homodimer. Mg(2+) is required as a cofactor.

It catalyses the reaction N-(5-phospho-beta-D-ribosyl)anthranilate + diphosphate = 5-phospho-alpha-D-ribose 1-diphosphate + anthranilate. Its pathway is amino-acid biosynthesis; L-tryptophan biosynthesis; L-tryptophan from chorismate: step 2/5. Functionally, catalyzes the transfer of the phosphoribosyl group of 5-phosphorylribose-1-pyrophosphate (PRPP) to anthranilate to yield N-(5'-phosphoribosyl)-anthranilate (PRA). The chain is Anthranilate phosphoribosyltransferase from Shewanella denitrificans (strain OS217 / ATCC BAA-1090 / DSM 15013).